The primary structure comprises 423 residues: MAKTIQAIRGMNDCAPTESPLWQWIEAQVRNVLNSYGYSEVRMPIVESTPLFARAIGEVTDVVSKEMYTFWDNDEQLTLRPEGTAGCVRAAIEHGWIYNNEQRLWYIGPMFRHERPQKGRYRQFHQVGVEVFGIANPEIDAELIMLTYRLWKALGIDQHVTLQLNSIGSLEARANYRSALVGFLENHQDLMSDEEKERLVRNPLRILDTKNPELQKVLDNAPKLLDYLDDESRAHFEQLCSLLDAVGIQYEINPKLVRGLDYYNKTVFEWVTSALGAQGTVCGGGRYDGLVEQLGGHATPSIGFAMGLERLVLLVQEVNPNVPTKSAVDIYVVYQGEGATLVAFELAEKVRSELPHLNTMLHCSGGNFKKQFKRADKSGATLALVIGESEVQNKQVVVKHLQGGTDQQTLDLVNIIDYLQTQF.

This sequence belongs to the class-II aminoacyl-tRNA synthetase family. In terms of assembly, homodimer.

It localises to the cytoplasm. The catalysed reaction is tRNA(His) + L-histidine + ATP = L-histidyl-tRNA(His) + AMP + diphosphate + H(+). The polypeptide is Histidine--tRNA ligase (Haemophilus influenzae (strain 86-028NP)).